Here is a 383-residue protein sequence, read N- to C-terminus: Protein KES1 (383 aa).

Basic and acidic residues predominate over residues 317-339 (FETASKDKARIENAQRQKRKDEA). The interval 317–346 (FETASKDKARIENAQRQKRKDEAAAGTPHQ) is disordered.

It belongs to the OSBP family.

Functionally, lipid transporter involved in lipid countertransport between the Golgi complex and membranes of the endoplasmic reticulum: specifically exchanges sterol with phosphatidylinositol 4-phosphate (PI4P), delivering sterol to the Golgi in exchange for PI4P, which is degraded by the SAC1 phosphatase in the endoplasmic reticulum. This is Protein KES1 (KES1) from Mycosarcoma maydis (Corn smut fungus).